The sequence spans 65 residues: DNA-directed RNA polymerase subunit omega (65 aa).

This sequence belongs to the RNA polymerase subunit omega family. As to quaternary structure, the RNAP catalytic core consists of 2 alpha, 1 beta, 1 beta' and 1 omega subunit. When a sigma factor is associated with the core the holoenzyme is formed, which can initiate transcription.

The enzyme catalyses RNA(n) + a ribonucleoside 5'-triphosphate = RNA(n+1) + diphosphate. Its function is as follows. Promotes RNA polymerase assembly. Latches the N- and C-terminal regions of the beta' subunit thereby facilitating its interaction with the beta and alpha subunits. In Baumannia cicadellinicola subsp. Homalodisca coagulata, this protein is DNA-directed RNA polymerase subunit omega.